Consider the following 277-residue polypeptide: MDNVVDRQVFYISDGTAITAEVLGHAVMSQFPVSINSITLPFVENESRARAVKEQIDAIYQQTGVRPLVFYSIVLPEVREIILQSQGFCQDIVQALVAPLQEELRLDPSPVAHRTHGLNPANLNKYDARIAAIDYTLAHDDGISMRNLDQAQVILLGVSRCGKTPTSLYLAMQFGIRAANYPFIADDMDNLNLPAALRPFQHKLFGLTINPERLAAIREERRENSRYASMRQCRMEVAEVEALYRKHQIRYINSTNYSVEEIATKILDIMGLNRRMY.

Residue 157–164 (GVSRCGKT) participates in ADP binding.

The protein belongs to the pyruvate, phosphate/water dikinase regulatory protein family. PSRP subfamily.

It catalyses the reaction [pyruvate, water dikinase] + ADP = [pyruvate, water dikinase]-phosphate + AMP + H(+). The enzyme catalyses [pyruvate, water dikinase]-phosphate + phosphate + H(+) = [pyruvate, water dikinase] + diphosphate. Its function is as follows. Bifunctional serine/threonine kinase and phosphorylase involved in the regulation of the phosphoenolpyruvate synthase (PEPS) by catalyzing its phosphorylation/dephosphorylation. In Cronobacter sakazakii (strain ATCC BAA-894) (Enterobacter sakazakii), this protein is Putative phosphoenolpyruvate synthase regulatory protein.